A 116-amino-acid chain; its full sequence is Large ribosomal subunit protein bL20 (116 aa).

This sequence belongs to the bacterial ribosomal protein bL20 family.

In terms of biological role, binds directly to 23S ribosomal RNA and is necessary for the in vitro assembly process of the 50S ribosomal subunit. It is not involved in the protein synthesizing functions of that subunit. The protein is Large ribosomal subunit protein bL20 of Picosynechococcus sp. (strain ATCC 27264 / PCC 7002 / PR-6) (Agmenellum quadruplicatum).